The following is a 114-amino-acid chain: Large ribosomal subunit protein uL22 (114 aa).

This sequence belongs to the universal ribosomal protein uL22 family. As to quaternary structure, part of the 50S ribosomal subunit.

Its function is as follows. This protein binds specifically to 23S rRNA; its binding is stimulated by other ribosomal proteins, e.g. L4, L17, and L20. It is important during the early stages of 50S assembly. It makes multiple contacts with different domains of the 23S rRNA in the assembled 50S subunit and ribosome. In terms of biological role, the globular domain of the protein is located near the polypeptide exit tunnel on the outside of the subunit, while an extended beta-hairpin is found that lines the wall of the exit tunnel in the center of the 70S ribosome. This Desulfosudis oleivorans (strain DSM 6200 / JCM 39069 / Hxd3) (Desulfococcus oleovorans) protein is Large ribosomal subunit protein uL22.